We begin with the raw amino-acid sequence, 604 residues long: Dopamine receptor 3 (604 aa).

Topologically, residues 1–23 are extracellular; the sequence is MLTGQHHIPGIESPLMVVLWRVA. Residues 24 to 44 traverse the membrane as a helical segment; it reads AGVFLPLVPTMAVFGNVLVIL. Over 45-58 the chain is Cytoplasmic; the sequence is SVYRERNLQTVTNM. Residues 59–79 form a helical membrane-spanning segment; the sequence is LIVSLAVSDLFVAIGVMSFGV. The Extracellular portion of the chain corresponds to 80–96; the sequence is YYEWNGFKWGLGSFFCH. The cysteines at positions 95 and 170 are disulfide-linked. Residues 97 to 117 form a helical membrane-spanning segment; sequence VYQALDVACSTASILNLLAIS. Residues 118–141 lie on the Cytoplasmic side of the membrane; that stretch reads LDRYIAIGHPISYAQYGARGGRAM. A helical membrane pass occupies residues 142-162; that stretch reads ISITIVWGVSCAVALPLLLGV. Topologically, residues 163–179 are extracellular; sequence NPMENDQCELANPWFNM. Residues 180–200 form a helical membrane-spanning segment; the sequence is ISSIFSFFIPCIAMIILYTII. Residues 201 to 520 are Cytoplasmic-facing; it reads FRRLRQRERA…TKQMRREHKA (320 aa). Residues 399 to 430 are disordered; the sequence is SIQDEKKMNSRPPENPFAHQNGTNKQRLLPNP. The helical transmembrane segment at 521-541 threads the bilayer; that stretch reads TVTLAVVLAVFLFCWLPFFIL. At 542–559 the chain is on the extracellular side; sequence HLSNSICLVIDSNSDCIG. A helical membrane pass occupies residues 560–580; the sequence is FLPLYLATWLGYLNSSLNPLI. Residues 581–604 lie on the Cytoplasmic side of the membrane; the sequence is YTVFDQRFRNAFRNILSCGFFKKR.

Belongs to the G-protein coupled receptor 1 family.

The protein localises to the cell membrane. Functionally, receptor for dopamine. The activity of this receptor is mediated by G proteins which activate adenylyl cyclase. In terms of antagonist responses, would be classed with the D2-like dopamine receptor group. Mediates the effect of dopamine on the inhibition of locomotion. Acts as an antagonist of dop-1. In Caenorhabditis briggsae, this protein is Dopamine receptor 3.